A 461-amino-acid polypeptide reads, in one-letter code: MVRLAAELLLLLGLLLLTLHITVLRSSPLQHGNDTVSLEQDSRVAENNVNADSSSSVQLGPGDRQTRVAHIPASQPWAQSPGTGGSLQRDGPGAFLLDLQNFPDLSKADINGQNPNIQVTIEVVDSLEGSEPEKGMRKENKPGWAAPNWRNWWQRSSSSSSSSVSTPKGPEEQDYPYESNTEDSNFLKPLGDWERRVKSEAGAGSRTQTEYDYIDGEGDWSAWSPCSVSCGNGNQKRTRSCGYACTATESRTCDMPSCPGIEDAFKTAATEVSLLAGTEEFNATELFGVDTDSCERWMNCKSEFLKKYMSKVATDLPSCPCFYPTEVAYSTADVHDANTKRNFRWKDASGPKEKLEIYKPTARYCIRSMLTLESTTLAAQHCCYDDSMKLITRGKGAGTPNLISTEFSADLHYKVDILPWIICKGDWSRYNHARPPNNGQKCAENPQDEDYYKQFEEAREF.

The N-terminal stretch at 1-26 (MVRLAAELLLLLGLLLLTLHITVLRS) is a signal peptide. An N-linked (GlcNAc...) asparagine glycan is attached at N33. Polar residues predominate over residues 40 to 58 (QDSRVAENNVNADSSSSVQ). 3 disordered regions span residues 40–62 (QDSR…LGPG), 73–92 (ASQP…RDGP), and 128–188 (EGSE…NFLK). A compositionally biased stretch (basic and acidic residues) spans 131 to 141 (EPEKGMRKENK). Residues 156 to 165 (SSSSSSSSVS) are compositionally biased toward low complexity. In terms of domain architecture, TSP type-1 spans 215–259 (DGEGDWSAWSPCSVSCGNGNQKRTRSCGYACTATESRTCDMPSCP). 3 disulfide bridges follow: C226/C253, C230/C258, and C241/C245. An N-linked (GlcNAc...) asparagine glycan is attached at N282. Positions 286 to 449 (LFGVDTDSCE…QKCAENPQDE (164 aa)) constitute an AMOP domain.

Belongs to the isthmin family.

Its subcellular location is the secreted. In terms of biological role, may specifically influence certain angiogenesis process. The chain is Isthmin-1 (ism1) from Danio rerio (Zebrafish).